Consider the following 340-residue polypeptide: GTPase Obg (340 aa).

The region spanning 1–159 (MGFIDEVKLC…KHVLLKLKVL (159 aa)) is the Obg domain. One can recognise an OBG-type G domain in the interval 160–329 (SDVGIIGMPN…LSEKLKKSNS (170 aa)). Residues 166–173 (GMPNAGKS), 191–195 (FTTVR), 212–215 (DIPG), 279–282 (NKCD), and 310–312 (NGD) each bind GTP. The Mg(2+) site is built by serine 173 and threonine 193.

Belongs to the TRAFAC class OBG-HflX-like GTPase superfamily. OBG GTPase family. In terms of assembly, monomer. Requires Mg(2+) as cofactor.

The protein resides in the cytoplasm. Its function is as follows. An essential GTPase which binds GTP, GDP and possibly (p)ppGpp with moderate affinity, with high nucleotide exchange rates and a fairly low GTP hydrolysis rate. Plays a role in control of the cell cycle, stress response, ribosome biogenesis and in those bacteria that undergo differentiation, in morphogenesis control. The protein is GTPase Obg of Wolbachia pipientis wMel.